The sequence spans 139 residues: Large ribosomal subunit protein bL17 (139 aa).

The protein belongs to the bacterial ribosomal protein bL17 family. In terms of assembly, part of the 50S ribosomal subunit. Contacts protein L32.

This is Large ribosomal subunit protein bL17 from Sphingopyxis alaskensis (strain DSM 13593 / LMG 18877 / RB2256) (Sphingomonas alaskensis).